Reading from the N-terminus, the 441-residue chain is MKAAVDLKPTLTIIKTEKVDLELFPSPDMECADVPLLTPSSKEMMSQALKATFSGFTKEQQRLGIPKDPRQWTETHVRDWVMWAVNEFSLKGVDFQKFCMNGAALCALGKDCFLELAPDFVGDILWEHLEILQKEDVKPYQVNGVNPAYPESRYTSDYFISYGIEHAQCVPPSEFSEPSFITESYQTLHPISSEELLSLKYENDYPSVILRDPLQTDTLQNDYFAIKQEVVTPDNMCMGRTSRGKLGGQDSFESIESYDSCDRLTQSWSSQSSFNSLQRVPSYDSFDSEDYPAALPNHKPKGTFKDYVRDRADLNKDKPVIPAAALAGYTGSGPIQLWQFLLELLTDKSCQSFISWTGDGWEFKLSDPDEVARRWGKRKNKPKMNYEKLSRGLRYYYDKNIIHKTAGKRYVYRFVCDLQSLLGYTPEELHAMLDVKPDADE.

N6-acetyllysine; alternate occurs at positions 8 and 15. Glycyl lysine isopeptide (Lys-Gly) (interchain with G-Cter in SUMO2); alternate cross-links involve residues Lys8 and Lys15. Thr38 carries the post-translational modification Phosphothreonine; by MAPK. The 86-residue stretch at 51 to 136 (ATFSGFTKEQ…EHLEILQKED (86 aa)) folds into the PNT domain. An activation domain; required for transcription activation region spans residues 130–243 (EILQKEDVKP…DNMCMGRTSR (114 aa)). Lys138 is covalently cross-linked (Glycyl lysine isopeptide (Lys-Gly) (interchain with G-Cter in SUMO2)). Tyr223 is subject to Phosphotyrosine. A Glycyl lysine isopeptide (Lys-Gly) (interchain with G-Cter in SUMO) cross-link involves residue Lys227. Residues Ser251 and Ser254 each carry the phosphoserine modification. Thr265 is modified (phosphothreonine). Ser267, Ser270, Ser282, and Ser285 each carry phosphoserine. The tract at residues 304-312 (FKDYVRDRA) is helix HI-1. Lys305 carries the N6-acetyllysine modification. The segment at 323-330 (AAALAGYT) is helix HI-2. The segment at residues 335-415 (IQLWQFLLEL…AGKRYVYRFV (81 aa)) is a DNA-binding region (ETS). Residues 418–422 (LQSLL) are helix H4. The helix H5 stretch occupies residues 426–432 (PEELHAM).

The protein belongs to the ETS family. Binds DNA as a homodimer; homodimerization is required for transcription activation. Interacts with MAF and MAFB. Interacts with PAX5; the interaction alters DNA-binding properties. Interacts with DAXX. Interacts with UBE2I. Interacts with SP100; the interaction is direct and modulates ETS1 transcriptional activity. Sumoylated on Lys-15 and Lys-227, preferentially with SUMO2; which inhibits transcriptional activity. Post-translationally, ubiquitinated; which induces proteasomal degradation. In terms of processing, phosphorylation at Ser-251, Ser-282 and Ser-285 by CaMK2/CaMKII in response to calcium signaling decreases affinity for DNA: an increasing number of phosphoserines causes DNA-binding to become progressively weaker. In terms of tissue distribution, highly expressed within lymphoid cells. Isoforms c-ETS-1A and Ets-1 p27 are both detected in all fetal tissues tested, but vary with tissue type in adult tissues. None is detected in brain or kidney.

The protein localises to the nucleus. The protein resides in the cytoplasm. Its activity is regulated as follows. Autoinhibited by a module composed of four alpha helices (HI-1, HI-2, H4, and H5) that flank the DNA-binding ETS domain, reducing the affinity for DNA. Phosphorylation by CaMK2/CaMKII in response to calcium signaling decreases affinity for DNA. In terms of biological role, transcription factor. Directly controls the expression of cytokine and chemokine genes in a wide variety of different cellular contexts. May control the differentiation, survival and proliferation of lymphoid cells. May also regulate angiogenesis through regulation of expression of genes controlling endothelial cell migration and invasion. Its function is as follows. Acts as a dominant-negative for isoform c-ETS-1A. This chain is Protein C-ets-1 (ETS1), found in Homo sapiens (Human).